Reading from the N-terminus, the 716-residue chain is Forkhead box protein P2 (716 aa).

A compositionally biased stretch (polar residues) spans 1–28; sequence MMQESATETISNSSMNQNGMSTLSSQLD. Disordered stretches follow at residues 1–45 and 286–340; these read MMQE…SEVS and KHGG…TGAS. Positions 293–306 are enriched in low complexity; that stretch reads TTNNSSSTTSSTTS. The span at 316–325 shows a compositional bias: polar residues; sequence SIVNGQSSVL. The segment covering 327–338 has biased composition (basic and acidic residues); sequence ARRDSSSHEETG. Residues 347–372 form a C2H2-type zinc finger; that stretch reads GVCKWPGCESICEDFGQFLKHLNNEH. The interval 389-410 is leucine-zipper; it reads VQQLEIQLSKERERLQAMMTHL. The segment at 423 to 427 is CTBP1-binding; it reads PLNLV. Residues 439 to 460 show a composition bias toward low complexity; the sequence is TSPQSLPQTPTTPTAPVTPITQ. The segment at 439–466 is disordered; the sequence is TSPQSLPQTPTTPTAPVTPITQGPSVIT. Positions 505–595 form a DNA-binding region, fork-head; it reads RPPFTYATLI…SQKITGSPTL (91 aa). 2 disordered regions span residues 650–669 and 679–716; these read LDHI…QPHI and VIAE…EDLE. The span at 700-716 shows a compositional bias: acidic residues; it reads LEDDREIEEEPLSEDLE.

As to quaternary structure, forms homodimers and heterodimers with FOXP1 and FOXP4. Dimerization is required for DNA-binding. Interacts with CTBP1. Interacts with FOXP1. Interacts with TBR1. Interacts with ZMYM2.

It localises to the nucleus. Functionally, transcriptional repressor that may play a role in the specification and differentiation of lung epithelium. May also play a role in developing neural, gastrointestinal and cardiovascular tissues. Can act with CTBP1 to synergistically repress transcription but CTPBP1 is not essential. Plays a role in synapse formation by regulating SRPX2 levels. The chain is Forkhead box protein P2 (FOXP2) from Pan paniscus (Pygmy chimpanzee).